Reading from the N-terminus, the 199-residue chain is dITP/XTP pyrophosphatase (199 aa).

12 to 17 (SGNAGK) contributes to the substrate binding site. D73 functions as the Proton acceptor in the catalytic mechanism. D73 provides a ligand contact to Mg(2+). Substrate-binding positions include S74, 157 to 160 (FGYD), K180, and 185 to 186 (HR).

Belongs to the HAM1 NTPase family. In terms of assembly, homodimer. It depends on Mg(2+) as a cofactor.

It carries out the reaction XTP + H2O = XMP + diphosphate + H(+). The enzyme catalyses dITP + H2O = dIMP + diphosphate + H(+). It catalyses the reaction ITP + H2O = IMP + diphosphate + H(+). Functionally, pyrophosphatase that catalyzes the hydrolysis of nucleoside triphosphates to their monophosphate derivatives, with a high preference for the non-canonical purine nucleotides XTP (xanthosine triphosphate), dITP (deoxyinosine triphosphate) and ITP. Seems to function as a house-cleaning enzyme that removes non-canonical purine nucleotides from the nucleotide pool, thus preventing their incorporation into DNA/RNA and avoiding chromosomal lesions. The protein is dITP/XTP pyrophosphatase of Neisseria meningitidis serogroup A / serotype 4A (strain DSM 15465 / Z2491).